A 224-amino-acid chain; its full sequence is UPF0758 protein RSc2444 (224 aa).

The region spanning 102-224 (TLESPQSVKD…VYSFLEHGKM (123 aa)) is the MPN domain. Zn(2+)-binding residues include His-173, His-175, and Asp-186. The JAMM motif signature appears at 173–186 (HNHPTGHVEPSESD).

It belongs to the UPF0758 family.

This Ralstonia nicotianae (strain ATCC BAA-1114 / GMI1000) (Ralstonia solanacearum) protein is UPF0758 protein RSc2444.